The chain runs to 133 residues: Profilin (133 aa).

This sequence belongs to the profilin family. Interacts with host TPM1. Interacts with protein A25.

It is found in the host cytoplasm. Participates in either intracellular transport of viral proteins or intercellular spread of the virus. Cellular profilins modulate actin filament dynamics (polymerization and depolymerization) via direct binding to actin through an actin-binding domain as well as by modulation of other actin-binding proteins. In contrast to cellular homologs, the poxvirus profilins seem to bind actin only weakly. The chain is Profilin (OPG171) from Variola virus (isolate Human/India/Ind3/1967) (VARV).